Consider the following 461-residue polypeptide: ATP synthase subunit beta 2 (461 aa).

151 to 158 (GGAGVGKT) contributes to the ATP binding site.

This sequence belongs to the ATPase alpha/beta chains family. As to quaternary structure, F-type ATPases have 2 components, CF(1) - the catalytic core - and CF(0) - the membrane proton channel. CF(1) has five subunits: alpha(3), beta(3), gamma(1), delta(1), epsilon(1). CF(0) has three main subunits: a(1), b(2) and c(9-12). The alpha and beta chains form an alternating ring which encloses part of the gamma chain. CF(1) is attached to CF(0) by a central stalk formed by the gamma and epsilon chains, while a peripheral stalk is formed by the delta and b chains.

Its subcellular location is the cell inner membrane. It catalyses the reaction ATP + H2O + 4 H(+)(in) = ADP + phosphate + 5 H(+)(out). Functionally, produces ATP from ADP in the presence of a proton gradient across the membrane. The catalytic sites are hosted primarily by the beta subunits. The chain is ATP synthase subunit beta 2 from Vibrio campbellii (strain ATCC BAA-1116).